The sequence spans 470 residues: Ribosomal protein uS12 methylthiotransferase RimO (470 aa).

The 112-residue stretch at 20-131 (PTVAFAHLGC…IVEVLQQVEA (112 aa)) folds into the MTTase N-terminal domain. C29, C65, C94, C169, C173, and C176 together coordinate [4Fe-4S] cluster. The 230-residue stretch at 155–384 (TTGEAVAYLK…MTLQQPISAA (230 aa)) folds into the Radical SAM core domain. One can recognise a TRAM domain in the interval 387–458 (ASWIGKTVDV…IYDLSGHVVS (72 aa)).

The protein belongs to the methylthiotransferase family. RimO subfamily. [4Fe-4S] cluster is required as a cofactor.

It localises to the cytoplasm. The catalysed reaction is L-aspartate(89)-[ribosomal protein uS12]-hydrogen + (sulfur carrier)-SH + AH2 + 2 S-adenosyl-L-methionine = 3-methylsulfanyl-L-aspartate(89)-[ribosomal protein uS12]-hydrogen + (sulfur carrier)-H + 5'-deoxyadenosine + L-methionine + A + S-adenosyl-L-homocysteine + 2 H(+). In terms of biological role, catalyzes the methylthiolation of an aspartic acid residue of ribosomal protein uS12. The chain is Ribosomal protein uS12 methylthiotransferase RimO from Synechococcus sp. (strain CC9311).